A 453-amino-acid chain; its full sequence is 3-phosphoshikimate 1-carboxyvinyltransferase (453 aa).

A compositionally biased stretch (polar residues) spans 1 to 12; it reads MDVNVTSSTVRG. The disordered stretch occupies residues 1-21; that stretch reads MDVNVTSSTVRGTTRAPPSKS. 3-phosphoshikimate contacts are provided by lysine 20, serine 21, and arginine 25. Residue lysine 20 participates in phosphoenolpyruvate binding. Phosphoenolpyruvate-binding residues include glycine 97 and arginine 125. 3-phosphoshikimate contacts are provided by serine 170, serine 171, glutamine 172, serine 198, aspartate 330, and lysine 357. Position 172 (glutamine 172) interacts with phosphoenolpyruvate. Residue aspartate 330 is the Proton acceptor of the active site. Residues arginine 361 and arginine 404 each coordinate phosphoenolpyruvate.

It belongs to the EPSP synthase family. Monomer.

It is found in the cytoplasm. It catalyses the reaction 3-phosphoshikimate + phosphoenolpyruvate = 5-O-(1-carboxyvinyl)-3-phosphoshikimate + phosphate. The protein operates within metabolic intermediate biosynthesis; chorismate biosynthesis. In terms of biological role, catalyzes the transfer of the enolpyruvyl moiety of phosphoenolpyruvate (PEP) to the 5-hydroxyl of shikimate-3-phosphate (S3P) to produce enolpyruvyl shikimate-3-phosphate and inorganic phosphate. The protein is 3-phosphoshikimate 1-carboxyvinyltransferase of Halorubrum lacusprofundi (strain ATCC 49239 / DSM 5036 / JCM 8891 / ACAM 34).